The following is a 154-amino-acid chain: Protein X (154 aa).

A disordered region spans residues 26–45 (RGRPVSGPLGSLSSSSPSAV). Residues 31 to 43 (SGPLGSLSSSSPS) show a composition bias toward low complexity. A mitochondrial targeting sequence region spans residues 68 to 117 (PCALRFTSARRMETTVNAHQILPKILHKRTLGLSTMSTTDLEAYFKDCLF).

It belongs to the orthohepadnavirus protein X family. In terms of assembly, may form homodimer. May interact with host CEBPA, CFLAR, CREB1, DDB1, E4F1, HBXIP, HSPD1/HSP60, NFKBIA, POLR2E and SMAD4. Interacts with host SMC5-SMC6 complex and induces its degradation. Interacts with host TRPC4AP; leading to prevent ubiquitination of TRPC4AP. Interacts with host PLSCR1; this interaction promotes ubiquitination and degradation of HBx and impairs HBx-mediated cell proliferation. Post-translationally, a fraction may be phosphorylated in insect cells and HepG2 cells, a human hepatoblastoma cell line. Phosphorylated in vitro by host protein kinase C or mitogen-activated protein kinase. N-acetylated in insect cells.

It localises to the host cytoplasm. The protein localises to the host nucleus. The protein resides in the host mitochondrion. In terms of biological role, multifunctional protein that plays a role in silencing host antiviral defenses and promoting viral transcription. Does not seem to be essential for HBV infection. May be directly involved in development of cirrhosis and liver cancer (hepatocellular carcinoma). Most of cytosolic activities involve modulation of cytosolic calcium. The effect on apoptosis is controversial depending on the cell types in which the studies have been conducted. May induce apoptosis by localizing in mitochondria and causing loss of mitochondrial membrane potential. May also modulate apoptosis by binding host CFLAR, a key regulator of the death-inducing signaling complex (DISC). Promotes viral transcription by using the host E3 ubiquitin ligase DDB1 to target the SMC5-SMC6 complex to proteasomal degradation. This host complex would otherwise bind to viral episomal DNA, and prevents its transcription. Moderately stimulates transcription of many different viral and cellular transcription elements. Promoters and enhancers stimulated by HBx contain DNA binding sites for NF-kappa-B, AP-1, AP-2, c-EBP, ATF/CREB, or the calcium-activated factor NF-AT. The polypeptide is Protein X (Hepatitis B virus genotype D subtype ayw (isolate Japan/JYW796/1988) (HBV-D)).